Consider the following 71-residue polypeptide: Heat-stable enterotoxin B (71 aa).

An N-terminal signal peptide occupies residues 1–19 (MKKIILALVLMLFSFCTLG). Residues 20 to 52 (QETASMHLDDTLSAPIAAEINRKACDTQTPSPS) constitute a propeptide that is removed on maturation. Disulfide bonds link Cys-59–Cys-64, Cys-60–Cys-68, and Cys-63–Cys-71.

This sequence belongs to the heat-stable enterotoxin family.

It localises to the secreted. In terms of biological role, toxin which activates the particulate form of guanylate cyclase and increases cyclic GMP levels within the host intestinal epithelial cells. Could play an important role in pathogenesis. The protein is Heat-stable enterotoxin B (ystB) of Yersinia enterocolitica.